The following is a 281-amino-acid chain: sn-glycerol-3-phosphate transport system permease protein UgpE (281 aa).

6 helical membrane-spanning segments follow: residues 16–36 (LILGIAVILFPLYVAFVAATL), 85–105 (FSITLGKITVSMLSAFAIVWF), 113–133 (FFWMIFITLMLPVEVRIFPTV), 142–162 (LDSYAGLTLPLMASATATFLF), 202–222 (ALFVITFIYGWNQYLWPLLII), and 247–267 (WNSVMAAMLLTLIPPVVIVLV). The ABC transmembrane type-1 domain maps to 77–268 (LLNSFVMAFS…IPPVVIVLVM (192 aa)).

This sequence belongs to the binding-protein-dependent transport system permease family. UgpAE subfamily. The complex is composed of two ATP-binding proteins (UgpC), two transmembrane proteins (UgpA and UgpE) and a solute-binding protein (UgpB).

The protein resides in the cell inner membrane. Part of the ABC transporter complex UgpBAEC involved in sn-glycerol-3-phosphate (G3P) import. Probably responsible for the translocation of the substrate across the membrane. The protein is sn-glycerol-3-phosphate transport system permease protein UgpE (ugpE) of Escherichia coli O157:H7.